The chain runs to 446 residues: MAVQLKWPILGVIIPCIIIFSLSYGSHYFILRHHLTMKQQLIYEFYVTMIWISYLLAIYTNPGRVPKNYKPSLASSTRIEQTEDDSDGLGLESREDETLIREEPISGDRCEWIRYCKKCNNYKPPRSHHCKICQQCVLQMDHHCPWTLNCVGNNNLPHFMRFLGWIIWGTGYLMIQLIKLIINYYENSNMPHYLFNKTELVAIIAITPLNFFVFASILVLFIRCLINICKGMTQIEIWEWERLELQWSSKRLWRLIRFNYGRLHKGKPFPELNTWTNTTNNVNYNDNDDDGDEDVELINLATNNNEDSTIVPQNFTIDDLIFPYNLGIWKNLVNALGYPYMWLIPFGKPKSNGYQPQISQDYKQDDQLNLPWPPDGIRQKEIEINVLQQQGYQRDREEEDEEELRSIRNYQELRRRLDPRLNVQRSDFINDMGEGLTDFGVDEDSD.

At 1 to 8 (MAVQLKWP) the chain is on the cytoplasmic side. The helical transmembrane segment at 9–29 (ILGVIIPCIIIFSLSYGSHYF) threads the bilayer. Residues 30-40 (ILRHHLTMKQQ) are Lumenal-facing. The helical transmembrane segment at 41–61 (LIYEFYVTMIWISYLLAIYTN) threads the bilayer. Residues 62–161 (PGRVPKNYKP…GNNNLPHFMR (100 aa)) are Cytoplasmic-facing. A DHHC domain is found at 114-164 (RYCKKCNNYKPPRSHHCKICQQCVLQMDHHCPWTLNCVGNNNLPHFMRFLG). Residue cysteine 144 is the S-palmitoyl cysteine intermediate of the active site. The chain crosses the membrane as a helical span at residues 162–182 (FLGWIIWGTGYLMIQLIKLII). The Lumenal portion of the chain corresponds to 183 to 201 (NYYENSNMPHYLFNKTELV). Residues 202 to 222 (AIIAITPLNFFVFASILVLFI) form a helical membrane-spanning segment. Topologically, residues 223 to 446 (RCLINICKGM…TDFGVDEDSD (224 aa)) are cytoplasmic.

Belongs to the DHHC palmitoyltransferase family. PFA4 subfamily.

The protein localises to the endoplasmic reticulum membrane. It carries out the reaction L-cysteinyl-[protein] + hexadecanoyl-CoA = S-hexadecanoyl-L-cysteinyl-[protein] + CoA. Functionally, mediates the reversible addition of palmitate to target proteins, thereby regulating their membrane association and biological function. This is Palmitoyltransferase PFA4 from Candida albicans (strain SC5314 / ATCC MYA-2876) (Yeast).